The primary structure comprises 496 residues: Solute carrier family 2, facilitated glucose transporter member 3 (496 aa).

Topologically, residues 1-10 (MGTQKVTPAL) are cytoplasmic. Residues 11 to 32 (IFAITVATIGSFQFGYNTGVIN) traverse the membrane as a helical segment. Residues 33-64 (APEKIIKEFINKTLTDKGNAPPSEVLLTSLWS) are Extracellular-facing. N-linked (GlcNAc...) asparagine glycosylation is present at N43. Residues 65–85 (LSVAIFSVGGMIGSFSVGLFV) form a helical membrane-spanning segment. Residues 86–90 (NRFGR) are Cytoplasmic-facing. The chain crosses the membrane as a helical span at residues 91 to 111 (RNSMLIVNLLAVTGGCFMGLC). Residues 112–118 (KVAKSVE) are Extracellular-facing. Residues 119-142 (MLILGRLVIGLFCGLCTGFVPMYI) form a helical membrane-spanning segment. At 143–153 (GEISPTALRGA) the chain is on the cytoplasmic side. Residues 154–174 (FGTLNQLGIVVGILVAQIFGL) traverse the membrane as a helical segment. D-glucose is bound at residue Q159. Residues 175–183 (EFILGSEEL) lie on the Extracellular side of the membrane. A helical transmembrane segment spans residues 184 to 204 (WPLLLGFTILPAILQSAALPF). Over 205-269 (CPESPRFLLI…LFRVSSYRQP (65 aa)) the chain is Cytoplasmic. At T232 the chain carries Phosphothreonine. A helical transmembrane segment spans residues 270–290 (IIISIVLQLSQQLSGINAVFY). The interval 277 to 279 (QLS) is important for selectivity against fructose. Residues 280–281 (QQ) and N286 each bind D-glucose. Over 291-304 (YSTGIFKDAGVQEP) the chain is Extracellular. Residues 305–325 (IYATIGAGVVNTIFTVVSLFL) form a helical membrane-spanning segment. N315 is a binding site for D-glucose. At 326 to 331 (VERAGR) the chain is on the cytoplasmic side. A helical transmembrane segment spans residues 332–352 (RTLHMIGLGGMAFCSTLMTVS). The Extracellular segment spans residues 353-363 (LLLKDNYNGMS). Residues 364–389 (FVCIGAILVFVAFFEIGPGPIPWFIV) traverse the membrane as a helical segment. Positions 378 and 386 each coordinate D-glucose. At 390–399 (AELFSQGPRP) the chain is on the cytoplasmic side. The helical transmembrane segment at 400-420 (AAMAVAGCSNWTSNFLVGLLF) threads the bilayer. The Extracellular segment spans residues 421 to 429 (PSAAHYLGA). The chain crosses the membrane as a helical span at residues 430–450 (YVFIIFTGFLITFLAFTFFKV). Over 451–496 (PETRGRTFEDITRAFEGQAHGADRSGKDGVMEMNSIEPAKETTTNV) the chain is Cytoplasmic. Phosphoserine occurs at positions 475 and 485. Position 492 is a phosphothreonine (T492).

Belongs to the major facilitator superfamily. Sugar transporter (TC 2.A.1.1) family. Glucose transporter subfamily. Interacts with SMIM43; the interaction may promote SLC2A3-mediated glucose transport to meet the energy needs of mesendoderm differentiation. As to expression, highly expressed in brain. Expressed in many tissues.

Its subcellular location is the cell membrane. The protein localises to the perikaryon. The protein resides in the cell projection. The enzyme catalyses D-glucose(out) = D-glucose(in). It carries out the reaction D-galactose(in) = D-galactose(out). With respect to regulation, deoxyglucose transport is inhibited by D-glucose, D-galactose and maltose. Galactose transport is inhibited by D-glucose and maltose. In terms of biological role, facilitative glucose transporter. Can also mediate the uptake of various other monosaccharides across the cell membrane. Mediates the uptake of glucose, 2-deoxyglucose, galactose, mannose, xylose and fucose, and probably also dehydroascorbate. Does not mediate fructose transport. Required for mesendoderm differentiation. This chain is Solute carrier family 2, facilitated glucose transporter member 3, found in Homo sapiens (Human).